The primary structure comprises 349 residues: Core protein VP7 (349 aa).

A glycan (N-linked (GlcNAc...) asparagine; by host) is linked at Asn287.

It belongs to the orbivirus VP7 family. In terms of assembly, homotrimer that assemble in a complex of 260 capsomers on an inner scaffold composed of VP3.

It is found in the virion. The VP7 protein is one of the five proteins (with VP1, VP3, VP4, and VP6) which form the inner capsid of the virus. This Bluetongue virus 1 (isolate Australia) (BTV 1) protein is Core protein VP7 (Segment-7).